Consider the following 459-residue polypeptide: ATP-binding protein Uup-like (459 aa).

Positions 132-350 (FEMEDVSYEI…QQANFWASKA (219 aa)) constitute an ABC transporter domain. 164–171 (GPNGCGKT) is an ATP binding site. Residues 357 to 375 (AKKSEPLKEESAVKNDRTS) are compositionally biased toward basic and acidic residues. The disordered stretch occupies residues 357–381 (AKKSEPLKEESAVKNDRTSKPKSVK).

It belongs to the ABC transporter superfamily. ABCF family. Uup subfamily.

Its subcellular location is the cytoplasm. It catalyses the reaction ATP + H2O = ADP + phosphate + H(+). Might play a role in ribosome assembly or function; this is missing the first ABC transporter domain compared to paralogs. This chain is ATP-binding protein Uup-like (uup-B), found in Haemophilus influenzae (strain ATCC 51907 / DSM 11121 / KW20 / Rd).